Consider the following 260-residue polypeptide: MFEARLINATILKKILDAIKELLHEATFECSESGIQLQAMDNSHVSLGSLTLRSDGFDKFRCDRNISMGMNLGSMAKILKCANNDDTVTVKAQDNADTVTFMFESPNHEKVSDYEMKLMNLDQEHLGIPETDYSCVVRMPSMEFARICRDLAQFSESMLICCTKEGVKFSASGDVGSANVKLAQTSSVDKEEEAVIIEMQEPVTLTFACRYLNAFTKATPLSAQVQLSMCADVPLVVEYAIKELGHIRYYLAPKIEDDES.

The DNA-binding element occupies 61-80 (RCDRNISMGMNLGSMAKILK).

Belongs to the PCNA family. As to quaternary structure, homotrimer. Forms a complex with activator 1 heteropentamer in the presence of ATP.

It localises to the nucleus. Functionally, this protein is an auxiliary protein of DNA polymerase delta and is involved in the control of eukaryotic DNA replication by increasing the polymerase's processibility during elongation of the leading strand. The protein is Proliferating cell nuclear antigen (PCNA) of Sarcophaga crassipalpis (Flesh fly).